Here is a 603-residue protein sequence, read N- to C-terminus: Arginine--tRNA ligase (603 aa).

The 'HIGH' region signature appears at 143–153 (PNIAKEMHVGH).

The protein belongs to the class-I aminoacyl-tRNA synthetase family. In terms of assembly, monomer.

The protein localises to the cytoplasm. It carries out the reaction tRNA(Arg) + L-arginine + ATP = L-arginyl-tRNA(Arg) + AMP + diphosphate. The chain is Arginine--tRNA ligase from Prochlorococcus marinus (strain SARG / CCMP1375 / SS120).